We begin with the raw amino-acid sequence, 243 residues long: Probable transcriptional regulatory protein LCABL_11860 (243 aa).

Residues 1-23 (MSGHSKWHNIQGRKNAQDSKRGK) form a disordered region.

Belongs to the TACO1 family.

It localises to the cytoplasm. This is Probable transcriptional regulatory protein LCABL_11860 from Lacticaseibacillus casei (strain BL23) (Lactobacillus casei).